A 478-amino-acid chain; its full sequence is Kynureninase (478 aa).

Residues Leu-138, Thr-139, 166–169 (FPSD), Asp-252, His-255, and Tyr-277 contribute to the pyridoxal 5'-phosphate site. Lys-278 is modified (N6-(pyridoxal phosphate)lysine). Trp-315 and Asn-343 together coordinate pyridoxal 5'-phosphate.

The protein belongs to the kynureninase family. In terms of assembly, homodimer. Requires pyridoxal 5'-phosphate as cofactor.

The protein resides in the cytoplasm. It carries out the reaction L-kynurenine + H2O = anthranilate + L-alanine + H(+). The catalysed reaction is 3-hydroxy-L-kynurenine + H2O = 3-hydroxyanthranilate + L-alanine + H(+). Its pathway is amino-acid degradation; L-kynurenine degradation; L-alanine and anthranilate from L-kynurenine: step 1/1. It participates in cofactor biosynthesis; NAD(+) biosynthesis; quinolinate from L-kynurenine: step 2/3. Catalyzes the cleavage of L-kynurenine (L-Kyn) and L-3-hydroxykynurenine (L-3OHKyn) into anthranilic acid (AA) and 3-hydroxyanthranilic acid (3-OHAA), respectively. In Coccidioides immitis (strain RS) (Valley fever fungus), this protein is Kynureninase.